Reading from the N-terminus, the 358-residue chain is Dual-specificity RNA methyltransferase RlmN (358 aa).

The Proton acceptor role is filled by Glu91. A Radical SAM core domain is found at 102-337; that stretch reads GNIRITQCLS…TILRKSKGQD (236 aa). Cysteines 109 and 342 form a disulfide. Residues Cys116, Cys120, and Cys123 each contribute to the [4Fe-4S] cluster site. S-adenosyl-L-methionine contacts are provided by residues 169–170, Ser201, 223–225, and Asn299; these read GE and SLH. Cys342 acts as the S-methylcysteine intermediate in catalysis.

This sequence belongs to the radical SAM superfamily. RlmN family. [4Fe-4S] cluster serves as cofactor.

The protein localises to the cytoplasm. The enzyme catalyses adenosine(2503) in 23S rRNA + 2 reduced [2Fe-2S]-[ferredoxin] + 2 S-adenosyl-L-methionine = 2-methyladenosine(2503) in 23S rRNA + 5'-deoxyadenosine + L-methionine + 2 oxidized [2Fe-2S]-[ferredoxin] + S-adenosyl-L-homocysteine. It catalyses the reaction adenosine(37) in tRNA + 2 reduced [2Fe-2S]-[ferredoxin] + 2 S-adenosyl-L-methionine = 2-methyladenosine(37) in tRNA + 5'-deoxyadenosine + L-methionine + 2 oxidized [2Fe-2S]-[ferredoxin] + S-adenosyl-L-homocysteine. In terms of biological role, specifically methylates position 2 of adenine 2503 in 23S rRNA and position 2 of adenine 37 in tRNAs. m2A2503 modification seems to play a crucial role in the proofreading step occurring at the peptidyl transferase center and thus would serve to optimize ribosomal fidelity. This chain is Dual-specificity RNA methyltransferase RlmN, found in Lawsonia intracellularis (strain PHE/MN1-00).